Reading from the N-terminus, the 128-residue chain is Anion exchange transporter (128 aa).

Residues 1–14 (LFSFKELNEQFKRK) lie on the Extracellular side of the membrane. The chain crosses the membrane as a helical span at residues 15–35 (IKVVLPVDLVLIIAASFACYC). The Cytoplasmic segment spans residues 36–66 (TNMENTYGLEVVGHIPRGIPPPRAPPMNILS). The helical transmembrane segment at 67-87 (AVITEAFGVALVGYAASLALA) threads the bilayer. Over 88-103 (QGSAKKFKYSVDDNQE) the chain is Extracellular. The helical transmembrane segment at 104–124 (FLAHGLSNVISSFLFCIPSAA) threads the bilayer. Topologically, residues 125 to 128 (AMGR) are cytoplasmic.

Belongs to the SLC26A/SulP transporter (TC 2.A.53) family. In terms of tissue distribution, expressed in gastric epithelium, predominantly in the gastric parietal cells but also at lower levels in mucosal cells.

The protein localises to the basolateral cell membrane. The protein resides in the recycling endosome membrane. It localises to the apical cell membrane. Its subcellular location is the lateral cell membrane. It carries out the reaction chloride(in) = chloride(out). It catalyses the reaction iodide(out) = iodide(in). The enzyme catalyses bromide(in) = bromide(out). The catalysed reaction is oxalate(in) = oxalate(out). It carries out the reaction nitrate(in) = nitrate(out). It catalyses the reaction sulfate(in) = sulfate(out). The enzyme catalyses D-gluconate(in) = D-gluconate(out). The catalysed reaction is thiocyanate(in) = thiocyanate(out). It carries out the reaction hydrogencarbonate(in) = hydrogencarbonate(out). It catalyses the reaction hydrogencarbonate(in) + chloride(out) = hydrogencarbonate(out) + chloride(in). In terms of biological role, acts as an anion channel mediating the transport of chloride, bromide, iodide, nitrate, sulfate, gluconate, thiocyanate, oxalate and bicarbonate ions. Its permeability towards bicarbonate is weak and increases when pH is above 7. Mediates thiocyanate transport in retinal pigment epithelium cells. Mediates iodide transport in the thyroid gland, playing an important role in the synthesis of thyroid hormones and the maintenance of thyroid function. This is Anion exchange transporter from Oryctolagus cuniculus (Rabbit).